The sequence spans 952 residues: Valine--tRNA ligase (952 aa).

Residues Pro-45–His-55 carry the 'HIGH' region motif. The 'KMSKS' region signature appears at Lys-571–Ser-575. Lys-574 is an ATP binding site. The stretch at Lys-894–Ala-950 forms a coiled coil.

Belongs to the class-I aminoacyl-tRNA synthetase family. ValS type 1 subfamily. Monomer.

It is found in the cytoplasm. The enzyme catalyses tRNA(Val) + L-valine + ATP = L-valyl-tRNA(Val) + AMP + diphosphate. Functionally, catalyzes the attachment of valine to tRNA(Val). As ValRS can inadvertently accommodate and process structurally similar amino acids such as threonine, to avoid such errors, it has a 'posttransfer' editing activity that hydrolyzes mischarged Thr-tRNA(Val) in a tRNA-dependent manner. In Nitrobacter winogradskyi (strain ATCC 25391 / DSM 10237 / CIP 104748 / NCIMB 11846 / Nb-255), this protein is Valine--tRNA ligase.